Reading from the N-terminus, the 338-residue chain is MKVFYDKDCDLSIIQGKKVAIIGYGSQGHAQACNLKDSGVDVTVGLRKGSATVAKAEAHGLKVADVATAVAAADLVMILTPDEFQGALYKNEIEPNIKKGATLAFSHGFSIHYNQVVPRADLDVIMIAPKAPGHTVRSEFVKGGGIPDLIAIYQDASGNAKNVALSYASGVGGGRTGIIETTFKDETETDLFGEQAVLCGGTVELVKAGFETLVEAGYAPEMAYFECLHELKLIVDLMYEGGIANMNYSISNNAEYGEYVTGPEVINEESRKAMRNALKRIQDGEYAKMFISEGATNYPSMTAKRRNNAAHGIEIIGEQLRSMMPWISANKIVDKTKN.

Residues 1 to 181 (MKVFYDKDCD…GGGRTGIIET (181 aa)) form the KARI N-terminal Rossmann domain. NADP(+) is bound by residues 24–27 (YGSQ), Arg47, Ser50, Thr52, and 82–85 (DEFQ). The active site involves His107. Gly133 is a binding site for NADP(+). The region spanning 182–327 (TFKDETETDL…EQLRSMMPWI (146 aa)) is the KARI C-terminal knotted domain. 4 residues coordinate Mg(2+): Asp190, Glu194, Glu226, and Glu230. Ser251 is a substrate binding site.

This sequence belongs to the ketol-acid reductoisomerase family. The cofactor is Mg(2+).

The enzyme catalyses (2R)-2,3-dihydroxy-3-methylbutanoate + NADP(+) = (2S)-2-acetolactate + NADPH + H(+). It catalyses the reaction (2R,3R)-2,3-dihydroxy-3-methylpentanoate + NADP(+) = (S)-2-ethyl-2-hydroxy-3-oxobutanoate + NADPH + H(+). Its pathway is amino-acid biosynthesis; L-isoleucine biosynthesis; L-isoleucine from 2-oxobutanoate: step 2/4. The protein operates within amino-acid biosynthesis; L-valine biosynthesis; L-valine from pyruvate: step 2/4. In terms of biological role, involved in the biosynthesis of branched-chain amino acids (BCAA). Catalyzes an alkyl-migration followed by a ketol-acid reduction of (S)-2-acetolactate (S2AL) to yield (R)-2,3-dihydroxy-isovalerate. In the isomerase reaction, S2AL is rearranged via a Mg-dependent methyl migration to produce 3-hydroxy-3-methyl-2-ketobutyrate (HMKB). In the reductase reaction, this 2-ketoacid undergoes a metal-dependent reduction by NADPH to yield (R)-2,3-dihydroxy-isovalerate. This Pseudomonas putida (strain ATCC 700007 / DSM 6899 / JCM 31910 / BCRC 17059 / LMG 24140 / F1) protein is Ketol-acid reductoisomerase (NADP(+)).